The chain runs to 136 residues: MLQPKRTKFRKVHKGRNRGIAGGTEVSFGTFGLKAVGRCRLTARQIEAARRAMTRAVKRQGKIWIRVFPDKPITEKPLEVRMGKGKGNVEYWVALIQPGKVLYEMDGVSEEIARHAFALAAAKLPVKTTFVTKTVM.

The protein belongs to the universal ribosomal protein uL16 family. In terms of assembly, part of the 50S ribosomal subunit.

Its function is as follows. Binds 23S rRNA and is also seen to make contacts with the A and possibly P site tRNAs. The protein is Large ribosomal subunit protein uL16 of Actinobacillus pleuropneumoniae serotype 5b (strain L20).